The primary structure comprises 465 residues: ATP synthase subunit beta (465 aa).

148 to 155 is a binding site for ATP; the sequence is GGAGVGKT.

The protein belongs to the ATPase alpha/beta chains family. In terms of assembly, F-type ATPases have 2 components, CF(1) - the catalytic core - and CF(0) - the membrane proton channel. CF(1) has five subunits: alpha(3), beta(3), gamma(1), delta(1), epsilon(1). CF(0) has three main subunits: a(1), b(2) and c(9-12). The alpha and beta chains form an alternating ring which encloses part of the gamma chain. CF(1) is attached to CF(0) by a central stalk formed by the gamma and epsilon chains, while a peripheral stalk is formed by the delta and b chains.

Its subcellular location is the cell inner membrane. It carries out the reaction ATP + H2O + 4 H(+)(in) = ADP + phosphate + 5 H(+)(out). Produces ATP from ADP in the presence of a proton gradient across the membrane. The catalytic sites are hosted primarily by the beta subunits. The protein is ATP synthase subunit beta of Chromobacterium violaceum (strain ATCC 12472 / DSM 30191 / JCM 1249 / CCUG 213 / NBRC 12614 / NCIMB 9131 / NCTC 9757 / MK).